An 868-amino-acid polypeptide reads, in one-letter code: Protein NIP100 (868 aa).

A CAP-Gly domain is found at 34–84; it reads GETQFAKGIWYGIELDKPLGKNDGSANGIRYFDIDLKKANSNGGYYGLFCK. Coiled-coil stretches lie at residues 101 to 175, 207 to 375, and 645 to 776; these read LNGN…HLDN, LDQT…QEEL, and SLLS…QIKE.

As to quaternary structure, component of the dynactin complex composed of at least ARP1, JNM1, NIP100 and ARP10. Dynactin comprises a short rod of the ARP1 filament attached to ARP10 at its pointed-end and probably associated with the capping protein at its barbed-end. The rod is implicated in dynein cargo binding. A sidearm formed by NIP100 projects from the ARP1 filament and is implicated in motor binding.

Its subcellular location is the cytoplasm. It is found in the cytoskeleton. The protein resides in the spindle pole. Functionally, motor-binding component of the dynactin complex which assists cytoplasmic dynein by increasing its processivity and by regulation of its cargo binding. The dynactin complex is required for the spindle translocation late in anaphase and is involved in a cell wall synthesis checkpoint. The protein is Protein NIP100 (NIP100) of Saccharomyces cerevisiae (strain ATCC 204508 / S288c) (Baker's yeast).